A 557-amino-acid polypeptide reads, in one-letter code: Urocanate hydratase (557 aa).

Residues 53–54 (GG), Q131, 177–179 (GMG), D197, R202, 243–244 (NA), 264–268 (QTSAH), 274–275 (YL), and Y323 each bind NAD(+). C411 is an active-site residue. G493 is an NAD(+) binding site.

It belongs to the urocanase family. NAD(+) serves as cofactor.

It localises to the cytoplasm. It catalyses the reaction 4-imidazolone-5-propanoate = trans-urocanate + H2O. The protein operates within amino-acid degradation; L-histidine degradation into L-glutamate; N-formimidoyl-L-glutamate from L-histidine: step 2/3. Functionally, catalyzes the conversion of urocanate to 4-imidazolone-5-propionate. The sequence is that of Urocanate hydratase from Hahella chejuensis (strain KCTC 2396).